A 383-amino-acid polypeptide reads, in one-letter code: Heme chaperone HemW (383 aa).

The Radical SAM core domain maps to 1 to 241; that stretch reads MPKLPPLSLY…LTMAGYQQYE (241 aa). Residue Tyr10 participates in S-adenosyl-L-methionine binding. Cys16, Cys20, and Cys23 together coordinate [4Fe-4S] cluster. S-adenosyl-L-methionine contacts are provided by residues Gly70, 71-72, Glu103, Gln130, Arg142, and Asp167; that span reads GT.

It belongs to the anaerobic coproporphyrinogen-III oxidase family. HemW subfamily. [4Fe-4S] cluster is required as a cofactor.

The protein localises to the cytoplasm. Probably acts as a heme chaperone, transferring heme to an unknown acceptor. Binds one molecule of heme per monomer, possibly covalently. Binds 1 [4Fe-4S] cluster. The cluster is coordinated with 3 cysteines and an exchangeable S-adenosyl-L-methionine. This Haemophilus influenzae (strain ATCC 51907 / DSM 11121 / KW20 / Rd) protein is Heme chaperone HemW.